The sequence spans 512 residues: D-alanine--D-alanyl carrier protein ligase (512 aa).

ATP is bound at residue 152 to 153; the sequence is TS. Asp199 serves as a coordination point for D-alanine. Position 294–299 (294–299) interacts with ATP; that stretch reads NAYGPT. Residue Val303 coordinates D-alanine. Residues Asp385, 397-400, and Lys499 each bind ATP; that span reads YGGR. Lys499 is a D-alanine binding site.

The protein belongs to the ATP-dependent AMP-binding enzyme family. DltA subfamily.

The protein resides in the cytoplasm. It carries out the reaction holo-[D-alanyl-carrier protein] + D-alanine + ATP = D-alanyl-[D-alanyl-carrier protein] + AMP + diphosphate. The protein operates within cell wall biogenesis; lipoteichoic acid biosynthesis. Functionally, catalyzes the first step in the D-alanylation of lipoteichoic acid (LTA), the activation of D-alanine and its transfer onto the D-alanyl carrier protein (Dcp) DltC. In an ATP-dependent two-step reaction, forms a high energy D-alanyl-AMP intermediate, followed by transfer of the D-alanyl residue as a thiol ester to the phosphopantheinyl prosthetic group of the Dcp. D-alanylation of LTA plays an important role in modulating the properties of the cell wall in Gram-positive bacteria, influencing the net charge of the cell wall. The protein is D-alanine--D-alanyl carrier protein ligase of Streptococcus pyogenes serotype M18 (strain MGAS8232).